A 977-amino-acid chain; its full sequence is Protein bicaudal C homolog 1 (977 aa).

The tract at residues 1 to 43 (MASQSEPGYLAAAQSDPGSNSERSTDSPVAGSEDDLVAAAPLL) is disordered. Phosphoserine is present on residues Ser27, Ser32, and Ser45. KH domains lie at 134 to 201 (RVTL…RARI) and 286 to 350 (PVST…RQYL). The residue at position 400 (Lys400) is an N6-acetyllysine. Over residues 590-621 (SLGEKVLSSNHGDPSMQTAGPEQASPKSNSVE) the composition is skewed to polar residues. Disordered stretches follow at residues 590–622 (SLGE…SVEG), 667–702 (GTKN…GSER), and 794–848 (EGSS…KSRE). A phosphoserine mark is found at Ser614 and Ser681. Positions 692-702 (LADKKAPGSER) are enriched in basic and acidic residues. Over residues 794–803 (EGSSLSLSRS) the composition is skewed to low complexity. One can recognise an SAM domain in the interval 875–938 (FKGSDLPELF…LLAISELSKN (64 aa)).

Belongs to the BicC family. As to quaternary structure, interacts (via KH domains) with ANKS6 (via SAM domain) in an RNA-dependent manner. Interacts with ANKS3. In terms of tissue distribution, in the adult, predominantly expressed in heart and kidney. In 8 week old mice, expressed in growing primary oocytes and in the stromal cells of the theca.

It is found in the cytoplasm. Its function is as follows. Putative RNA-binding protein. May be involved in regulating gene expression during embryonic development. This chain is Protein bicaudal C homolog 1 (Bicc1), found in Mus musculus (Mouse).